The sequence spans 418 residues: Protein MAEA homolog (418 aa).

Positions 141–173 (NNTKLKRILVDYMLRMSYFETATKLSESSNIMD) constitute a LisH domain. One can recognise a CTLH domain in the interval 179–236 (IFREAKKVIDALKNREVASALTWCADNKTRLKKSKSKFEFQLRLQEFIELVRVDTAES). The RING-Gid-type zinc-finger motif lies at 330-403 (CTKEDPLSQE…NGGKITCPRT (74 aa)).

In terms of assembly, interacts with RANBPM.

Its subcellular location is the cytoplasm. The polypeptide is Protein MAEA homolog (Arabidopsis thaliana (Mouse-ear cress)).